The following is a 717-amino-acid chain: Transport/processing ATP-binding protein ComA (717 aa).

A Peptidase C39 domain is found at 11–138 (QVDQMDCGVA…EEWTGVTLFM (128 aa)). Cys-17 is an active-site residue. 6 helical membrane-spanning segments follow: residues 166 to 186 (GLIANIVLATLLVTVINIVGS), 205 to 225 (LGIISIGLVIVYIFQQILSYA), 237 to 257 (LSIDVILSYIKHVFHLPMSFF), 282 to 302 (TILSIFLDVSTVVIISLVLFS), 306 to 326 (NLFFMTLLALPIYTVIIFAFM), and 397 to 417 (VAHLLLNVGILWMGAVLVMDG). The 283-residue stretch at 168–450 (IANIVLATLL…IINLQTKLQT (283 aa)) folds into the ABC transmembrane type-1 domain. An ABC transporter domain is found at 484-717 (MTFKQVHYKY…GGFYAHLVNS (234 aa)). Residue 517–524 (GISGSGKT) coordinates ATP.

Belongs to the ABC transporter superfamily. Competence factor exporter (TC 3.A.1.112.1) family.

Its subcellular location is the cell membrane. Its function is as follows. Required for induction of competence. Seems to transport the competence-stimulating peptide (CSP). The chain is Transport/processing ATP-binding protein ComA (comA) from Streptococcus pneumoniae serotype 4 (strain ATCC BAA-334 / TIGR4).